The following is a 169-amino-acid chain: Endoribonuclease YbeY (169 aa).

3 residues coordinate Zn(2+): histidine 128, histidine 132, and histidine 138.

Belongs to the endoribonuclease YbeY family. Requires Zn(2+) as cofactor.

It is found in the cytoplasm. Single strand-specific metallo-endoribonuclease involved in late-stage 70S ribosome quality control and in maturation of the 3' terminus of the 16S rRNA. This Rhizorhabdus wittichii (strain DSM 6014 / CCUG 31198 / JCM 15750 / NBRC 105917 / EY 4224 / RW1) (Sphingomonas wittichii) protein is Endoribonuclease YbeY.